Consider the following 417-residue polypeptide: Phosphoglycerate kinase 1 (417 aa).

Position 2 is an N-acetylserine (S2). Phosphoserine is present on residues S2 and S4. K6 carries the post-translational modification N6-succinyllysine. K11 carries the post-translational modification N6-acetyllysine. (2R)-3-phosphoglycerate is bound by residues V23, D24, F25, N26, Q38, R39, S62, H63, G65, and R66. The mitochondrial targeting region exposed following cis-trans isomerization by PIN1 and recognized by the TOM complex for mitochondrial translocation of the protein stretch occupies residues 38 to 43 (QRIKAA). K75 carries the N6-acetyllysine modification. Y76 is modified (phosphotyrosine). An N6-acetyllysine mark is found at K86 and K91. At K97 the chain carries N6-(2-hydroxyisobutyryl)lysine; alternate. Position 97 is an N6-acetyllysine; alternate (K97). (2R)-3-phosphoglycerate-binding residues include L122 and R123. N6-acetyllysine; alternate is present on K131. Position 131 is an N6-malonyllysine; alternate (K131). K146 bears the N6-acetyllysine mark. H170 and R171 together coordinate (2R)-3-phosphoglycerate. An N6-succinyllysine modification is found at K191. The residue at position 196 (Y196) is a Phosphotyrosine. K199 is modified (N6-acetyllysine). The residue at position 203 (S203) is a Phosphoserine. An ADP-binding site is contributed by G214. CDP is bound at residue G214. Residues A215 and K216 each contribute to the AMP site. A215 is a binding site for ATP. A Mg(2+)-binding site is contributed by A215. K216 carries the post-translational modification N6-(2-hydroxyisobutyryl)lysine. 2 residues coordinate Mg(2+): A218 and D219. D219 lines the CDP pocket. K220 is a binding site for AMP. K220 contributes to the ATP binding site. K220 bears the N6-(2-hydroxyisobutyryl)lysine mark. Residue G238 coordinates ADP. G238 is a CDP binding site. G239 lines the AMP pocket. G239 provides a ligand contact to ATP. N6-acetyllysine occurs at positions 267 and 291. Residue G313 participates in AMP binding. Position 313 (G313) interacts with ATP. K323 bears the N6-(2-hydroxyisobutyryl)lysine mark. G338, V340, and F343 together coordinate CDP. Residue F343 participates in ADP binding. E344 contacts AMP. Positions 344, 375, and 376 each coordinate ATP. Residue D375 participates in Mg(2+) binding.

This sequence belongs to the phosphoglycerate kinase family. Monomer. Interacts with kinase MAPK1/ERK2; the interaction is direct, occurs under hypoxic conditions, and promotes its interaction with PIN1. Interacts with peptidyl-prolyl cis-trans isomerase PIN1; the interaction is direct, occurs under hypoxic conditions, and targets the protein to the mitochondrion by promoting interactions with the TOM complex. Interacts with mitochondrial circRNA mcPGK1 (via its 2nd stem-loop); the interaction is direct and targets the protein to the mitochondrion by promoting interactions with the TOM complex. Interacts with pyruvate dehydrogenase kinase PDK1; the interaction is direct, occurs under hypoxic conditions and leads to PDK1-mediated inhibition of pyruvate dehydrogenase complex activity. Requires Mg(2+) as cofactor. In terms of processing, phosphorylated at Ser-203 by MAPK1/ERK2 under hypoxic conditions, which promotes its mitochondrial targeting.

Its subcellular location is the cytoplasm. It is found in the cytosol. The protein localises to the mitochondrion matrix. It catalyses the reaction (2R)-3-phosphoglycerate + ATP = (2R)-3-phospho-glyceroyl phosphate + ADP. The enzyme catalyses L-seryl-[protein] + ATP = O-phospho-L-seryl-[protein] + ADP + H(+). It functions in the pathway carbohydrate degradation; glycolysis; pyruvate from D-glyceraldehyde 3-phosphate: step 2/5. Its function is as follows. Catalyzes one of the two ATP producing reactions in the glycolytic pathway via the reversible conversion of 1,3-diphosphoglycerate to 3-phosphoglycerate. Both L- and D- forms of purine and pyrimidine nucleotides can be used as substrates, but the activity is much lower on pyrimidines. In addition to its role as a glycolytic enzyme, it seems that PGK-1 acts as a polymerase alpha cofactor protein (primer recognition protein). Acts as a protein kinase when localized to the mitochondrion where it phosphorylates pyruvate dehydrogenase kinase PDK1 to inhibit pyruvate dehydrogenase complex activity and suppress the formation of acetyl-coenzyme A from pyruvate, and consequently inhibit oxidative phosphorylation and promote glycolysis. May play a role in sperm motility. This Notamacropus eugenii (Tammar wallaby) protein is Phosphoglycerate kinase 1 (PGK1).